The sequence spans 315 residues: Prephenate dehydratase (315 aa).

Residues 3-189 enclose the Prephenate dehydratase domain; that stretch reads RIAYLGPEGT…ARTRFLLIGV (187 aa). The region spanning 203–280 is the ACT domain; that stretch reads SAVLRIANVP…ADVRYLGSWP (78 aa).

In terms of assembly, homodimer.

The catalysed reaction is prephenate + H(+) = 3-phenylpyruvate + CO2 + H2O. Its pathway is amino-acid biosynthesis; L-phenylalanine biosynthesis; phenylpyruvate from prephenate: step 1/1. The protein is Prephenate dehydratase (pheA) of Mycobacterium ulcerans (strain Agy99).